A 118-amino-acid polypeptide reads, in one-letter code: Acidic elicitin A1 (118 aa).

An N-terminal signal peptide occupies residues 1-20 (MNFRALFAATVAALVGSTSA). 3 disulfide bridges follow: Cys-23–Cys-91, Cys-47–Cys-76, and Cys-71–Cys-115.

It belongs to the elicitin family.

It is found in the secreted. Functionally, induces local and distal defense responses (incompatible hypersensitive reaction) in plants from the solanaceae and cruciferae families. Elicits leaf necrosis and causes the accumulation of pathogenesis-related proteins. Might interact with the lipidic molecules of the plasma membrane. The chain is Acidic elicitin A1 (B14) from Phytophthora cryptogea.